Consider the following 338-residue polypeptide: Solute carrier family 35 member G5 (338 aa).

A disordered region spans residues 1–21; that stretch reads MAGSHPYFNLPDSTHPSPPSA. 9 helical membrane passes run 37–57, 67–87, 105–125, 160–180, 190–210, 221–241, 250–270, 281–301, and 305–325; these read TNGL…VGPL, LPSL…ALPL, CFCA…VQVV, CGLL…LWTL, ALGY…LLVY, TVAF…LFVL, LLSW…FTCV, LVCA…YYVL, and VAPS…IITA. Positions 49-174 constitute an EamA 1 domain; it reads LPAGFVGPLS…SILGLIIIVG (126 aa). Residues 272–325 enclose the EamA 2 domain; sequence YAVTKAHPALVCAVLHSEVVVALILQYYVLHETVAPSDIMGAGIVLGSIAIITA.

It belongs to the SLC35G solute transporter family.

The protein localises to the membrane. The chain is Solute carrier family 35 member G5 (SLC35G5) from Pan troglodytes (Chimpanzee).